A 473-amino-acid polypeptide reads, in one-letter code: ATP synthase subunit beta (473 aa).

Gly158 to Thr165 contributes to the ATP binding site.

The protein belongs to the ATPase alpha/beta chains family. In terms of assembly, F-type ATPases have 2 components, CF(1) - the catalytic core - and CF(0) - the membrane proton channel. CF(1) has five subunits: alpha(3), beta(3), gamma(1), delta(1), epsilon(1). CF(0) has three main subunits: a(1), b(2) and c(9-12). The alpha and beta chains form an alternating ring which encloses part of the gamma chain. CF(1) is attached to CF(0) by a central stalk formed by the gamma and epsilon chains, while a peripheral stalk is formed by the delta and b chains.

The protein localises to the cell membrane. It carries out the reaction ATP + H2O + 4 H(+)(in) = ADP + phosphate + 5 H(+)(out). In terms of biological role, produces ATP from ADP in the presence of a proton gradient across the membrane. The catalytic sites are hosted primarily by the beta subunits. This chain is ATP synthase subunit beta, found in Geobacillus sp. (strain WCH70).